We begin with the raw amino-acid sequence, 664 residues long: Ubiquinol oxidase subunit 1 (664 aa).

2 helical membrane-spanning segments follow: residues 15-35 (PILVGTFIGVVIVGVAVLGLI) and 57-77 (LAAMYIILALVALFRGFADAI). His106 is a binding site for heme b. 12 helical membrane passes run 109–129 (IMIFFLAMAFMTGLFNFIVPL), 136–156 (VAFPFLNNLSFWMTAVAFILV), 190–210 (YIWAVQISGVGTLLTGVNFFV), 233–253 (LCASILIMVAFPVLTVAVGLL), 278–298 (LIWAWGHPEVYILVIPAFGVF), 316–336 (MVYATCSIMVLSFLVWVHHFF), 347–367 (FFGIATMIISIPTGIKLFNWL), 383–403 (WAVGFMITFTIGGMTGVMLAI), 414–434 (LFLIAHFHNTIIGGVYFGYIC), 456–476 (AFWFWFVGFYCAFVPLYIVGF), 490–510 (AWHPWLLVAEVGAVLVMLGIA), and 603–623 (ALIFGFAAVWYIWWLAAVGLV). Residues His284, Tyr288, His333, and His334 each contribute to the Cu cation site. Positions 284–288 (HPEVY) form a cross-link, 1'-histidyl-3'-tyrosine (His-Tyr). A Fe(II)-heme a-binding site is contributed by His419. Position 421 (His421) interacts with heme b.

It belongs to the heme-copper respiratory oxidase family. In terms of assembly, heterotetramer of the subunits 1, 2, 3 and 4.

The protein resides in the cell membrane. In terms of biological role, catalytic subunit of the enzyme. Electrons originating in a quinol are transferred to the bimetallic center formed by heme a and copper B. The sequence is that of Ubiquinol oxidase subunit 1 (cyaA) from Acetobacter aceti.